The primary structure comprises 177 residues: Isopentenyl-diphosphate Delta-isomerase 1 (177 aa).

Mn(2+)-binding residues include H24 and H30. Residues 28 to 160 (SLHRAISIFI…PHAYSFWLEA (133 aa)) form the Nudix hydrolase domain. The active site involves C65. Position 65 (C65) interacts with Mg(2+). H67 is a binding site for Mn(2+). E85 is a Mg(2+) binding site. Positions 110 and 112 each coordinate Mn(2+). E112 is a catalytic residue.

This sequence belongs to the IPP isomerase type 1 family. Mg(2+) is required as a cofactor. It depends on Mn(2+) as a cofactor.

It is found in the cytoplasm. It catalyses the reaction isopentenyl diphosphate = dimethylallyl diphosphate. Its pathway is isoprenoid biosynthesis; dimethylallyl diphosphate biosynthesis; dimethylallyl diphosphate from isopentenyl diphosphate: step 1/1. Catalyzes the 1,3-allylic rearrangement of the homoallylic substrate isopentenyl (IPP) to its highly electrophilic allylic isomer, dimethylallyl diphosphate (DMAPP). In Aromatoleum aromaticum (strain DSM 19018 / LMG 30748 / EbN1) (Azoarcus sp. (strain EbN1)), this protein is Isopentenyl-diphosphate Delta-isomerase 1.